The chain runs to 181 residues: Inner membrane-spanning protein YciB (181 aa).

The next 5 helical transmembrane spans lie at 10–30 (LIIFFAVYKFFDIYIASGALI), 50–70 (MHLITFAMVTVFGTLTLVFHD), 72–92 (AFIKWKVTIIYALFALALGVS), 118–138 (VTWYWVSFFAICGLVNIYVAF), and 148–168 (FKVFGLTALTLINTVITVFYL).

The protein belongs to the YciB family.

It is found in the cell inner membrane. Its function is as follows. Plays a role in cell envelope biogenesis, maintenance of cell envelope integrity and membrane homeostasis. The sequence is that of Inner membrane-spanning protein YciB from Shewanella sp. (strain ANA-3).